Here is a 663-residue protein sequence, read N- to C-terminus: NAD(P)H-quinone oxidoreductase subunit 5, chloroplastic (663 aa).

The next 16 membrane-spanning stretches (helical) occupy residues 11–31, 41–61, 89–109, 126–146, 149–169, 189–209, 224–244, 260–280, 292–312, 329–349, 398–418, 436–456, 482–502, 528–548, 607–627, and 635–655; these read WLIPMLPFLSAFVAGFGLISF, LYGLISTITVFFSMIISMNLL, FFIDPLSSLMLFLVTSVAVLV, FFAYLSLFTASMLGLVLSPNL, IYIFWELVGMCSYLLIGFWFT, FCLLLGILGLYWFTNSFDFIT, HLYFFIFCSFLLFCGPIAKSA, TPISALIHAATMVAAGIFLVA, IMNLITCIGILTAFLGSTIAL, LGYMMVAMGIGSYKAGLFHLV, FTFLIGTLSLCGVPPFACFWS, IAWITAGLTGFYMFRVYLLAF, LYMLIPLIILSFLSLFIGFIS, ILLNFSSIGVALIGMIIAYSI, WLFDGVVNLTGISTLLGGQSL, and VSSYLFSILIGALVLFFFLPL.

This sequence belongs to the complex I subunit 5 family. As to quaternary structure, NDH is composed of at least 16 different subunits, 5 of which are encoded in the nucleus.

The protein resides in the plastid. It localises to the chloroplast thylakoid membrane. The enzyme catalyses a plastoquinone + NADH + (n+1) H(+)(in) = a plastoquinol + NAD(+) + n H(+)(out). It catalyses the reaction a plastoquinone + NADPH + (n+1) H(+)(in) = a plastoquinol + NADP(+) + n H(+)(out). NDH shuttles electrons from NAD(P)H:plastoquinone, via FMN and iron-sulfur (Fe-S) centers, to quinones in the photosynthetic chain and possibly in a chloroplast respiratory chain. The immediate electron acceptor for the enzyme in this species is believed to be plastoquinone. Couples the redox reaction to proton translocation, and thus conserves the redox energy in a proton gradient. The polypeptide is NAD(P)H-quinone oxidoreductase subunit 5, chloroplastic (ndhF) (Chara vulgaris (Common stonewort)).